The sequence spans 148 residues: uncharacterized protein (148 aa).

The region spanning 8–148 (QVMQEPELKI…DGFLTLILRN (141 aa)) is the N-acetyltransferase domain.

Belongs to the acetyltransferase family.

This is an uncharacterized protein from Bacillus subtilis (strain 168).